An 82-amino-acid polypeptide reads, in one-letter code: Immediate early response 3-interacting protein 1 (82 aa).

2 helical membrane passes run 2-22 (AFTLYSLMQAALLCVNAIAVL) and 62-82 (VMRVPLIIVNSITIVLLLLFG).

The protein belongs to the YOS1 family.

It is found in the endoplasmic reticulum membrane. Regulator of endoplasmic reticulum secretion that acts as a key determinant of brain size. Required for secretion of extracellular matrix proteins. Required for correct brain development by depositing sufficient extracellular matrix proteins for tissue integrity and the proliferation of neural progenitors. Acts as a regulator of the unfolded protein response (UPR). The chain is Immediate early response 3-interacting protein 1 from Rattus norvegicus (Rat).